Consider the following 261-residue polypeptide: Ribosomal RNA small subunit methyltransferase J (261 aa).

S-adenosyl-L-methionine-binding positions include 109-110, 125-126, and aspartate 179; these read RD and ER.

It belongs to the methyltransferase superfamily. RsmJ family.

Its subcellular location is the cytoplasm. It catalyses the reaction guanosine(1516) in 16S rRNA + S-adenosyl-L-methionine = N(2)-methylguanosine(1516) in 16S rRNA + S-adenosyl-L-homocysteine + H(+). Its function is as follows. Specifically methylates the guanosine in position 1516 of 16S rRNA. The protein is Ribosomal RNA small subunit methyltransferase J of Pseudomonas aeruginosa (strain LESB58).